Consider the following 253-residue polypeptide: Small ribosomal subunit protein eS4 (253 aa).

The S4 RNA-binding domain occupies 43–114 (LPLLLIVRNV…YPVKFFKLHP (72 aa)).

This sequence belongs to the eukaryotic ribosomal protein eS4 family.

This chain is Small ribosomal subunit protein eS4 (rps4e), found in Aeropyrum pernix (strain ATCC 700893 / DSM 11879 / JCM 9820 / NBRC 100138 / K1).